The chain runs to 92 residues: Dolichol-phosphate mannosyltransferase subunit 3 (92 aa).

2 consecutive transmembrane segments (helical) span residues 8-28 and 37-57; these read LWALALLGSTWAALTMGALGL and VLWPLPAYLLVSAGCYALGTV.

The protein belongs to the DPM3 family. In terms of assembly, component of the dolichol-phosphate mannose (DPM) synthase complex composed of DPM1, DPM2 and DPM3; within the complex, associates with DPM1 via its C-terminal domain and with DPM2 via its N-terminal portion. This interaction stabilizes DPM1 protein.

The protein resides in the endoplasmic reticulum membrane. The protein operates within protein modification; protein glycosylation. Functionally, stabilizer subunit of the dolichol-phosphate mannose (DPM) synthase complex; tethers catalytic subunit DPM1 to the endoplasmic reticulum. The chain is Dolichol-phosphate mannosyltransferase subunit 3 (DPM3) from Bos taurus (Bovine).